The sequence spans 619 residues: Probable galacturonosyltransferase 7 (619 aa).

The Cytoplasmic portion of the chain corresponds to 1–19 (MKGGGGGGGGGGGGKRRWK). A helical; Signal-anchor for type II membrane protein transmembrane segment spans residues 20 to 40 (VLVIGVLVLVILSMLVPLAFL). Over 41–619 (LGLHNGFHSP…RFLSDCNVNP (579 aa)) the chain is Lumenal. N-linked (GlcNAc...) asparagine glycans are attached at residues asparagine 68, asparagine 106, asparagine 132, asparagine 343, and asparagine 421. The disordered stretch occupies residues 95 to 139 (KSDINVGSRDVNATSGTDSKKRGLPVSPTVVANPSPANKTKSEAS). Polar residues predominate over residues 124 to 139 (VVANPSPANKTKSEAS).

Belongs to the glycosyltransferase 8 family. Expressed in roots, inflorescences, flowers, siliques, leaves and stems.

Its subcellular location is the golgi apparatus membrane. The protein operates within glycan metabolism; pectin biosynthesis. In terms of biological role, may be involved in pectin biosynthesis. This is Probable galacturonosyltransferase 7 (GAUT7) from Arabidopsis thaliana (Mouse-ear cress).